The sequence spans 134 residues: Small ribosomal subunit protein uS8c (134 aa).

This sequence belongs to the universal ribosomal protein uS8 family. Part of the 30S ribosomal subunit.

The protein resides in the plastid. Its subcellular location is the chloroplast. In terms of biological role, one of the primary rRNA binding proteins, it binds directly to 16S rRNA central domain where it helps coordinate assembly of the platform of the 30S subunit. The polypeptide is Small ribosomal subunit protein uS8c (rps8) (Arabis hirsuta (Hairy rock-cress)).